The chain runs to 412 residues: Putative potassium channel protein RPA4233 (412 aa).

The next 5 helical transmembrane spans lie at 35–55 (FIVF…VPAM), 65–85 (ALEL…IWIA), 164–184 (LMAC…AMHI), 202–222 (WWAI…ATGI), and 225–245 (MVAS…VGIV). The short motif at 210–215 (TIGYGD) is the Selectivity filter element. 270-388 (LFSHLTAGDI…RKINQIVEGR (119 aa)) lines the a nucleoside 3',5'-cyclic phosphate pocket.

It belongs to the potassium channel family.

Its subcellular location is the cell membrane. The polypeptide is Putative potassium channel protein RPA4233 (Rhodopseudomonas palustris (strain ATCC BAA-98 / CGA009)).